The chain runs to 339 residues: Dihydroorotase (339 aa).

Zn(2+) contacts are provided by histidine 12 and histidine 14. Substrate-binding positions include 14–16 (HVR) and asparagine 40. Zn(2+)-binding residues include lysine 94, histidine 133, histidine 167, and aspartate 239. N6-carboxylysine is present on lysine 94. Histidine 133 lines the substrate pocket. The active site involves aspartate 239. Residues histidine 243 and alanine 255 each coordinate substrate.

This sequence belongs to the metallo-dependent hydrolases superfamily. DHOase family. Class II DHOase subfamily. In terms of assembly, homodimer. Zn(2+) is required as a cofactor.

The catalysed reaction is (S)-dihydroorotate + H2O = N-carbamoyl-L-aspartate + H(+). It functions in the pathway pyrimidine metabolism; UMP biosynthesis via de novo pathway; (S)-dihydroorotate from bicarbonate: step 3/3. In terms of biological role, catalyzes the reversible cyclization of carbamoyl aspartate to dihydroorotate. This chain is Dihydroorotase, found in Helicobacter pylori (strain P12).